A 364-amino-acid chain; its full sequence is MAEFVRAQIFGTTFEITSRYTDLQPVGMGAFGLVCSAKDQLTGQPVAVKKIMKPFSTPVLSKRTYRELKLLKHLRHENIISLSDIFISPLEDIYFVTELLGTDLHRLLTSRPLEKQFIQYFLYQILRGLKYVHSAGVVHRDLKPSNILINENCDLKICDFGLARIQDPQMTGYVSTRYYRAPEIMLTWQKYDVEVDIWSAACIFAEMLEGKPLFPGKDHVNQFSIITELLGTPPDDVIRGICSENTLRFVKSLPKRERQPLANKFKNADPDAIDLLERMLVFDSKKRIRAGEALAHEYLAPYHDPTDEPEAQEKFDWSFNDADLPVDTWKIMMYSEILDFHNIEQANEGEVLVEGAGTAPQGFA.

Positions tyrosine 20 to leucine 299 constitute a Protein kinase domain. ATP contacts are provided by residues valine 26–valine 34 and lysine 49. Aspartate 141 acts as the Proton acceptor in catalysis. Threonine 171 carries the phosphothreonine modification. Positions threonine 171–tyrosine 173 match the TXY motif. At tyrosine 173 the chain carries Phosphotyrosine.

This sequence belongs to the protein kinase superfamily. Ser/Thr protein kinase family. MAP kinase subfamily. HOG1 sub-subfamily. Mg(2+) serves as cofactor. Dually phosphorylated on Thr-171 and Tyr-173, which activates the enzyme.

It is found in the cytoplasm. It localises to the nucleus. It carries out the reaction L-seryl-[protein] + ATP = O-phospho-L-seryl-[protein] + ADP + H(+). The enzyme catalyses L-threonyl-[protein] + ATP = O-phospho-L-threonyl-[protein] + ADP + H(+). With respect to regulation, activated by tyrosine and threonine phosphorylation. Functionally, proline-directed serine/threonine-protein kinase involved in a signal transduction pathway that is activated by changes in the osmolarity of the extracellular environment. Controls osmotic regulation of transcription of target genes. The polypeptide is Mitogen-activated protein kinase hog1 (hog1) (Aspergillus terreus (strain NIH 2624 / FGSC A1156)).